The chain runs to 254 residues: tRNA pseudouridine synthase A (254 aa).

Catalysis depends on Asp52, which acts as the Nucleophile. Tyr110 contacts substrate.

It belongs to the tRNA pseudouridine synthase TruA family. Homodimer.

The catalysed reaction is uridine(38/39/40) in tRNA = pseudouridine(38/39/40) in tRNA. Formation of pseudouridine at positions 38, 39 and 40 in the anticodon stem and loop of transfer RNAs. The sequence is that of tRNA pseudouridine synthase A from Thermodesulfovibrio yellowstonii (strain ATCC 51303 / DSM 11347 / YP87).